Reading from the N-terminus, the 503-residue chain is Transcription termination/antitermination protein NusA (503 aa).

The S1 motif domain maps to 140–206 (GELVIGVVKR…RGPQLLVSRT (67 aa)). The KH domain maps to 308–374 (SHTMDIAVNK…FMEKLDVDEE (67 aa)).

Belongs to the NusA family. As to quaternary structure, monomer. Binds directly to the core enzyme of the DNA-dependent RNA polymerase and to nascent RNA.

It localises to the cytoplasm. Participates in both transcription termination and antitermination. The sequence is that of Transcription termination/antitermination protein NusA from Coxiella burnetii (strain RSA 493 / Nine Mile phase I).